The chain runs to 223 residues: Deoxyribose-phosphate aldolase (223 aa).

The active-site Proton donor/acceptor is the aspartate 92. Lysine 158 serves as the catalytic Schiff-base intermediate with acetaldehyde. The Proton donor/acceptor role is filled by lysine 188.

It belongs to the DeoC/FbaB aldolase family. DeoC type 1 subfamily.

The protein localises to the cytoplasm. The enzyme catalyses 2-deoxy-D-ribose 5-phosphate = D-glyceraldehyde 3-phosphate + acetaldehyde. The protein operates within carbohydrate degradation; 2-deoxy-D-ribose 1-phosphate degradation; D-glyceraldehyde 3-phosphate and acetaldehyde from 2-deoxy-alpha-D-ribose 1-phosphate: step 2/2. In terms of biological role, catalyzes a reversible aldol reaction between acetaldehyde and D-glyceraldehyde 3-phosphate to generate 2-deoxy-D-ribose 5-phosphate. This chain is Deoxyribose-phosphate aldolase, found in Mycobacterium avium (strain 104).